A 141-amino-acid polypeptide reads, in one-letter code: Small ribosomal subunit protein bS16 (141 aa).

Composition is skewed to polar residues over residues 89-101 and 109-129; these read NVSVSHAESTEAI and ATANTESNEVSDSESTATATI. The tract at residues 89 to 141 is disordered; the sequence is NVSVSHAESTEAITNAEPIQATANTESNEVSDSESTATATIRESEEQPPISES.

This sequence belongs to the bacterial ribosomal protein bS16 family.

The protein is Small ribosomal subunit protein bS16 of Trichodesmium erythraeum (strain IMS101).